The sequence spans 247 residues: Mannose-P-dolichol utilization defect 1 protein (247 aa).

The residue at position 2 (A2) is an N-acetylalanine. Transmembrane regions (helical) follow at residues 37-57, 74-94, 100-120, 128-145, 151-171, 185-205, and 213-233; these read CLKI…SLLV, LSLQ…VYSI, FSSW…CFLV, VKGV…LVLL, LTVV…GRLL, LSAI…FTSI, and MAGT…QLLF. Residues 39 to 105 form the PQ-loop 1 domain; that stretch reads KILLSKGLGL…NNFPFSSWGE (67 aa). In terms of domain architecture, PQ-loop 2 spans 159–216; the sequence is ASNVPAVVVGRLLQAATNYHNGHTGQLSAITVFLLFGGSLARIFTSIQETGDPLMAGT.

The protein belongs to the MPDU1 (TC 2.A.43.3) family.

It localises to the membrane. Its function is as follows. Required for normal utilization of mannose-dolichol phosphate (Dol-P-Man) in the synthesis of N-linked and O-linked oligosaccharides and GPI anchors. This Homo sapiens (Human) protein is Mannose-P-dolichol utilization defect 1 protein (MPDU1).